Consider the following 168-residue polypeptide: 6,7-dimethyl-8-ribityllumazine synthase (168 aa).

5-amino-6-(D-ribitylamino)uracil is bound by residues W31, 65–67, and 90–92; these read SFE and NVI. (2S)-2-hydroxy-3-oxobutyl phosphate is bound at residue 95–96; the sequence is ET. H98 functions as the Proton donor in the catalytic mechanism. F123 is a 5-amino-6-(D-ribitylamino)uracil binding site. R137 is a binding site for (2S)-2-hydroxy-3-oxobutyl phosphate.

This sequence belongs to the DMRL synthase family.

The catalysed reaction is (2S)-2-hydroxy-3-oxobutyl phosphate + 5-amino-6-(D-ribitylamino)uracil = 6,7-dimethyl-8-(1-D-ribityl)lumazine + phosphate + 2 H2O + H(+). Its pathway is cofactor biosynthesis; riboflavin biosynthesis; riboflavin from 2-hydroxy-3-oxobutyl phosphate and 5-amino-6-(D-ribitylamino)uracil: step 1/2. Catalyzes the formation of 6,7-dimethyl-8-ribityllumazine by condensation of 5-amino-6-(D-ribitylamino)uracil with 3,4-dihydroxy-2-butanone 4-phosphate. This is the penultimate step in the biosynthesis of riboflavin. The protein is 6,7-dimethyl-8-ribityllumazine synthase of Christiangramia forsetii (strain DSM 17595 / CGMCC 1.15422 / KT0803) (Gramella forsetii).